Here is a 438-residue protein sequence, read N- to C-terminus: MKAALDLKPTLSIKTEKEYEAYSCSDMECADVPLLTPSSKEMMSQALRATFSRFTKEQQRLGIPIDPREWTDMHVREWVSWAVNEFTLKGVDFQKFCMSGAALCALGKECFLELAPDFVGDILWEHLEILQKDSKQYQTSEITPAYPESRYTSDYFISYGIEHAQCVPPSEFSEPSFITESYQTLHPISSEELLSLKYENDYPLGLLRDPLQPESLQGDYFTIKQEVVTPDNMCLGRISRGKLGGQESFESIESHDSCDRLTQSWSSQSSYNSLQRVPSYDSFDSEDYPPAMPSHKSKGTFKDYVRDRAELNKDKPVIPAAALAGYTGSGPIQLWQFLLELLTDKSCQSFISWTGDGWEFKLSDPDEVARRWGKRKNKPKMNYEKLSRGLRYYYDKNIIHKTAGKRYVYRFVCDLQSLLGYVPEELHAMLDVKPDTDE.

The region spanning 49–134 is the PNT domain; sequence ATFSRFTKEQ…EHLEILQKDS (86 aa). Positions 128 to 240 are activation domain; required for transcription activation; that stretch reads EILQKDSKQY…DNMCLGRISR (113 aa). The segment at 301-309 is helix HI-1; sequence FKDYVRDRA. Residues 320–327 form a helix HI-2 region; sequence AAALAGYT. A DNA-binding region (ETS) is located at residues 332 to 412; sequence IQLWQFLLEL…AGKRYVYRFV (81 aa). Residues 415–419 are helix H4; that stretch reads LQSLL. The interval 423 to 429 is helix H5; it reads PEELHAM.

This sequence belongs to the ETS family. As to quaternary structure, binds DNA as a homodimer; homodimerization is required for transcription activation.

Its subcellular location is the nucleus. The protein resides in the cytoplasm. Autoinhibited by a module composed of four alpha helices (HI-1, HI-2, H4, and H5) that flank the DNA-binding ETS domain, reducing the affinity for DNA. In terms of biological role, transcription factor. Directly controls the expression of cytokine and chemokine genes in a wide variety of different cellular contexts. The protein is Protein c-ets-1-A (ets1-a) of Xenopus laevis (African clawed frog).